The sequence spans 198 residues: RxLR effector protein Htp1 (198 aa).

An N-terminal signal peptide occupies residues 1-23; that stretch reads MRIHHPLTLAALCVVLHESLGAA. Residues 46–49 carry the RxLR motif; that stretch reads RHLR. Disordered regions lie at residues 48-101 and 115-198; these read LRSD…TPMK and TKNA…PTFD. A glycan (N-linked (GlcNAc...) asparagine) is linked at Asn-70. Positions 70 to 91 are enriched in polar residues; it reads NNSQEQATTGNSVETNQVPSTE. Residues 126–137 show a composition bias toward acidic residues; sequence DDDDSDFSDDDV. Low complexity predominate over residues 173 to 191; sequence APTNAPTGTDAPTDAPTDA.

The protein belongs to the RxLR effector family. As to quaternary structure, interacts with the effector Htp3 within the host cells.

It localises to the secreted. The protein localises to the host cell. In terms of biological role, effector involved in the disease saprolegniosis in salmonids and other freshwater fish, resulting in considerable economic losses in aquaculture. Within the host fish cells, Htp1 is involved in the uptake of the S.parasitica effector Htp3 at a neutral pH (pH 7.5) and its release from vesicles into host cytosol where it degrades nucleic acids. The chain is RxLR effector protein Htp1 from Saprolegnia parasitica (strain CBS 223.65).